The following is a 376-amino-acid chain: MSRLQFQLQTRDGRARRGRLTFPRGTVETPAFMPVGTYGSVKGILPDQVRALGAEIILGNTFHLYLRPGLDIIADHGGLHGFCRWDGPILTDSGGFQVFSLAHRRKITEQGVTFASPTDGARVFLGPEESMKIQKVLDSDVVMIFDECTPYPATEDVARRSMELSLRWAQRSRNAHDELGNDAALFGIVQGGVHTDLRSRSADALQAIGFDGYAIGGLAVGEPEDERNAMLDHLDPELPADRPRYLMGVGRPEDLVEGVARGVDMFDCVMPTRNARNGHYFTSFGTVRIRNSQYARDMDPIEPGCGCVACTGGYTRSYLRHLDRCNEMLAPMLGTLHNLFYYEKLMADIRAAIEAGTFLAFRESFYAARGAVAPPL.

The Proton acceptor role is filled by Asp92. Substrate contacts are provided by residues 92 to 96, Asp146, Gln190, and Gly217; that span reads DSGGF. Residues 248-254 form an RNA binding region; sequence GVGRPED. Residue Asp267 is the Nucleophile of the active site. Residues 272-276 form an RNA binding; important for wobble base 34 recognition region; it reads TRNAR. Residues Cys305, Cys307, Cys310, and His337 each contribute to the Zn(2+) site.

It belongs to the queuine tRNA-ribosyltransferase family. In terms of assembly, homodimer. Within each dimer, one monomer is responsible for RNA recognition and catalysis, while the other monomer binds to the replacement base PreQ1. Zn(2+) is required as a cofactor.

The catalysed reaction is 7-aminomethyl-7-carbaguanine + guanosine(34) in tRNA = 7-aminomethyl-7-carbaguanosine(34) in tRNA + guanine. It participates in tRNA modification; tRNA-queuosine biosynthesis. Catalyzes the base-exchange of a guanine (G) residue with the queuine precursor 7-aminomethyl-7-deazaguanine (PreQ1) at position 34 (anticodon wobble position) in tRNAs with GU(N) anticodons (tRNA-Asp, -Asn, -His and -Tyr). Catalysis occurs through a double-displacement mechanism. The nucleophile active site attacks the C1' of nucleotide 34 to detach the guanine base from the RNA, forming a covalent enzyme-RNA intermediate. The proton acceptor active site deprotonates the incoming PreQ1, allowing a nucleophilic attack on the C1' of the ribose to form the product. After dissociation, two additional enzymatic reactions on the tRNA convert PreQ1 to queuine (Q), resulting in the hypermodified nucleoside queuosine (7-(((4,5-cis-dihydroxy-2-cyclopenten-1-yl)amino)methyl)-7-deazaguanosine). This chain is Queuine tRNA-ribosyltransferase, found in Stenotrophomonas maltophilia (strain R551-3).